A 345-amino-acid polypeptide reads, in one-letter code: Ribosomal RNA small subunit methyltransferase C (345 aa).

Belongs to the methyltransferase superfamily. RsmC family. As to quaternary structure, monomer.

The protein localises to the cytoplasm. The catalysed reaction is guanosine(1207) in 16S rRNA + S-adenosyl-L-methionine = N(2)-methylguanosine(1207) in 16S rRNA + S-adenosyl-L-homocysteine + H(+). Functionally, specifically methylates the guanine in position 1207 of 16S rRNA in the 30S particle. The polypeptide is Ribosomal RNA small subunit methyltransferase C (Shewanella denitrificans (strain OS217 / ATCC BAA-1090 / DSM 15013)).